The primary structure comprises 144 residues: Large ribosomal subunit protein uL14 (144 aa).

Residues 107–144 are disordered; the sequence is NEGYTHSQHSNQREGGERIQAQPSPPHARRAVKTSFCR.

Belongs to the universal ribosomal protein uL14 family. As to quaternary structure, part of the 50S ribosomal subunit. Forms a cluster with proteins L3 and L19. In the 70S ribosome, L14 and L19 interact and together make contacts with the 16S rRNA in bridges B5 and B8.

Its function is as follows. Binds to 23S rRNA. Forms part of two intersubunit bridges in the 70S ribosome. The protein is Large ribosomal subunit protein uL14 of Xanthobacter autotrophicus (strain ATCC BAA-1158 / Py2).